We begin with the raw amino-acid sequence, 420 residues long: MKLLVVGSGGREHAIAKKLLESKDVEKVFVAPGNDGMTLDGLELVNISISEHYKLIDFAKTNDVAWTFIGPDDALAAGIVDDFNQAGLKAFGPTRAAAELEWSKDFAKEIMVKYGVPTATYGTFSDFEEAKAYIEKHGAPIVVKADGLALGKGVVVAETVEQAVEAAHEMLLDNKFGDSGARVVIEEFLEGEEFSLFAFVNGDKFYIMPTAQDHKRAYDGDKGPNTGGMGAYAPVPHLPQSVVDTAVDTIVKPVLEGVIKEGRPYLGVLYAGLILTADGPKVIEFNARFGDPETQIILPRLTSDFAQNITDILDSKEPNIMWTDKGVTLGVVVASKGYPLDYERGVELPAKTEGDVITYYAGAKFAENSRALLSNGGRVYMLVTTADTVKEAQASIYQELYQQKIEGLFYRTDIGSKAIK.

Residues 108–314 form the ATP-grasp domain; the sequence is KEIMVKYGVP…FAQNITDILD (207 aa). 134–195 is an ATP binding site; the sequence is IEKHGAPIVV…EEFLEGEEFS (62 aa). Mg(2+) contacts are provided by Glu284 and Asn286.

Belongs to the GARS family. It depends on Mg(2+) as a cofactor. Mn(2+) is required as a cofactor.

The enzyme catalyses 5-phospho-beta-D-ribosylamine + glycine + ATP = N(1)-(5-phospho-beta-D-ribosyl)glycinamide + ADP + phosphate + H(+). Its pathway is purine metabolism; IMP biosynthesis via de novo pathway; N(1)-(5-phospho-D-ribosyl)glycinamide from 5-phospho-alpha-D-ribose 1-diphosphate: step 2/2. In Streptococcus pneumoniae serotype 4 (strain ATCC BAA-334 / TIGR4), this protein is Phosphoribosylamine--glycine ligase.